The chain runs to 212 residues: Ribosomal RNA small subunit methyltransferase G (212 aa).

S-adenosyl-L-methionine contacts are provided by residues glycine 73, 127–128, and arginine 143; that span reads IE.

This sequence belongs to the methyltransferase superfamily. RNA methyltransferase RsmG family.

It is found in the cytoplasm. The enzyme catalyses guanosine(527) in 16S rRNA + S-adenosyl-L-methionine = N(7)-methylguanosine(527) in 16S rRNA + S-adenosyl-L-homocysteine. Its function is as follows. Specifically methylates the N7 position of guanine in position 527 of 16S rRNA. This Methylobacterium sp. (strain 4-46) protein is Ribosomal RNA small subunit methyltransferase G.